A 57-amino-acid polypeptide reads, in one-letter code: Large ribosomal subunit protein bL32 (57 aa).

The tract at residues 1–23 (MAVPKKRTSKTRTNRRRAQKKAR) is disordered.

The protein belongs to the bacterial ribosomal protein bL32 family.

This is Large ribosomal subunit protein bL32 from Natranaerobius thermophilus (strain ATCC BAA-1301 / DSM 18059 / JW/NM-WN-LF).